A 121-amino-acid chain; its full sequence is Cell division protein FtsB (121 aa).

Residues 1–6 are Cytoplasmic-facing; sequence MRNWRW. Residues 7-24 traverse the membrane as a helical segment; that stretch reads LLLVLAVLLAWLQYRFWF. The Periplasmic portion of the chain corresponds to 25–121; sequence GPGNSGEVMM…AASADPVDHP (97 aa). Residues 31 to 66 are a coiled coil; sequence EVMMLEAQVAHQTRDNEGLRQRNQALAAEVKDLKDG. Residues 98–121 form a disordered region; the sequence is PPAAQEAAPPAQPPAASADPVDHP.

The protein belongs to the FtsB family. In terms of assembly, part of a complex composed of FtsB, FtsL and FtsQ.

Its subcellular location is the cell inner membrane. Functionally, essential cell division protein. May link together the upstream cell division proteins, which are predominantly cytoplasmic, with the downstream cell division proteins, which are predominantly periplasmic. The sequence is that of Cell division protein FtsB from Xanthomonas campestris pv. campestris (strain 8004).